The following is a 148-amino-acid chain: Large ribosomal subunit protein bL9 (148 aa).

Belongs to the bacterial ribosomal protein bL9 family.

Its function is as follows. Binds to the 23S rRNA. The polypeptide is Large ribosomal subunit protein bL9 (Staphylococcus aureus (strain Newman)).